The chain runs to 578 residues: Probable lysosomal cobalamin transporter (578 aa).

A run of 2 helical transmembrane segments spans residues 8-28 and 46-66; these read LIWV…SVFI and IFAI…VALV. Asn-70 carries an N-linked (GlcNAc...) asparagine glycan. Helical transmembrane passes span 95–115 and 145–165; these read VVYY…IPFT and TITF…VPVA. A glycan (N-linked (GlcNAc...) asparagine) is linked at Asn-168. The next 6 membrane-spanning stretches (helical) occupy residues 188–208, 312–332, 347–367, 375–395, 419–439, and 506–526; these read ALTF…VLYT, LLGG…MLLT, GYIL…VQAA, VIFT…IAIV, LTTA…SMVV, and FFGV…LIVV. A disordered region spans residues 539-578; it reads RQMDEDAEEAEEEGLLASTGRRLDTAWQDITGRSNRQRDS. Over residues 540-552 the composition is skewed to acidic residues; that stretch reads QMDEDAEEAEEEG.

It belongs to the LIMR family. LMBRD1 subfamily.

Its subcellular location is the lysosome membrane. Probable lysosomal cobalamin transporter. Required to export cobalamin from lysosomes allowing its conversion to cofactors. This chain is Probable lysosomal cobalamin transporter, found in Aspergillus terreus (strain NIH 2624 / FGSC A1156).